The following is a 119-amino-acid chain: MVRCRTLVAAALALLLTPALAWYKPAAGSHHYSVGRAAGLLSSFHRFPSTRRSESPALRVGTVPLRNLEMRPSVRSLALCVKDVTPNLQSCQRQLNSRGTFQCKADVFLSLHKAECQSA.

A signal peptide spans 1-21 (MVRCRTLVAAALALLLTPALA). The propeptide occupies 53–119 (SESPALRVGT…SLHKAECQSA (67 aa)).

This sequence belongs to the neuropeptide B/W family. In terms of tissue distribution, detected in a variety of tissues. High levels are found in the lymphoid organs, central nervous system, mammary gland and uterus.

The protein resides in the secreted. Functionally, may be involved in the regulation of feeding, neuroendocrine system, memory and learning. May be involved in the afferent pain pathway. The chain is Neuropeptide B (Npb) from Rattus norvegicus (Rat).